The primary structure comprises 544 residues: Potential vesicular glutamate transporter vglu-3 (544 aa).

Topologically, residues 1 to 49 (MPNGSIRNCANAVADTVRQTFSRKTWEHKEQLQTITEQKKFFLRKVRWQ) are cytoplasmic. The helical transmembrane segment at 50–70 (IAILAHFGFAISFGIRSNFGV) threads the bilayer. Residues 71–104 (AKNRMVNNFTDAYGEVHEREFLWTGAEVGMMESS) lie on the Extracellular side of the membrane. Asn78 is a glycosylation site (N-linked (GlcNAc...) asparagine). A helical membrane pass occupies residues 105–125 (FFYGYAASQIPAGVLAAKFAP). At 126–127 (NK) the chain is on the cytoplasmic side. Residues 128–148 (IFMLGILVASFMNILSAISFN) traverse the membrane as a helical segment. Over 149–154 (FHPYTD) the chain is Extracellular. Residues 155–175 (IFVMVVQAVQGLALGVLYPAM) form a helical membrane-spanning segment. Residues 176–193 (HGVWKFWAPPLERSKLAT) are Cytoplasmic-facing. Residues 194-214 (TAFTGSSVGVMTGLPASAYLV) traverse the membrane as a helical segment. The Extracellular portion of the chain corresponds to 215–219 (SHFSW). The chain crosses the membrane as a helical span at residues 220-240 (STPFYVFGVVGIIWSLIWMYV). Topologically, residues 241-285 (SSHSPETHGYISDDEKKQVTEKIGDVAVKNMSLTTLPWRDMMTSS) are cytoplasmic. Residues 286-306 (AVWAIIICTFCRSWGFFLLLG) form a helical membrane-spanning segment. Residues 307–323 (NQLTYMKDVLHIDIKNS) lie on the Extracellular side of the membrane. The helical transmembrane segment at 324–344 (GFISIFPQFGMCIVTLATGQL) threads the bilayer. The Cytoplasmic segment spans residues 345-360 (CDYLRSSGKMSTEAVR). A helical transmembrane segment spans residues 361 to 381 (KSVNTFGFTVEAMMLGCLAFV). Residues 382 to 384 (RDP) are Extracellular-facing. The helical transmembrane segment at 385–405 (VIAVTCLVIACTGSGSVLSGF) threads the bilayer. The Cytoplasmic segment spans residues 406–416 (NVNHFDIAPRY). The chain crosses the membrane as a helical span at residues 417 to 437 (APILMGIANGLGAVAGVGGMV). Over 438–450 (TNTVTYQNPDGWK) the chain is Extracellular. Residues 451–471 (WVFLLAMAIDIFGVIFFLIFA) form a helical membrane-spanning segment. Residues 472–544 (KGDVLPWARE…APAEKSESSS (73 aa)) are Cytoplasmic-facing. Residues 501–544 (SLSRKTRNREGDTSYEKMEEDSEMKPCSKKVEARAPAEKSESSS) are disordered. Positions 508 to 544 (NREGDTSYEKMEEDSEMKPCSKKVEARAPAEKSESSS) are enriched in basic and acidic residues.

Belongs to the major facilitator superfamily. Sodium/anion cotransporter family. VGLUT subfamily.

It is found in the membrane. This Caenorhabditis elegans protein is Potential vesicular glutamate transporter vglu-3 (vglu-3).